A 254-amino-acid chain; its full sequence is DNA repair protein RecO (254 aa).

The protein belongs to the RecO family.

Involved in DNA repair and RecF pathway recombination. This Anaeromyxobacter dehalogenans (strain 2CP-C) protein is DNA repair protein RecO.